The chain runs to 78 residues: Small ribosomal subunit protein bS18 (78 aa).

This sequence belongs to the bacterial ribosomal protein bS18 family. As to quaternary structure, part of the 30S ribosomal subunit. Forms a tight heterodimer with protein bS6.

In terms of biological role, binds as a heterodimer with protein bS6 to the central domain of the 16S rRNA, where it helps stabilize the platform of the 30S subunit. The sequence is that of Small ribosomal subunit protein bS18 from Geobacillus sp. (strain WCH70).